Reading from the N-terminus, the 348-residue chain is Nicotinate-nucleotide--dimethylbenzimidazole phosphoribosyltransferase (348 aa).

Glu316 acts as the Proton acceptor in catalysis.

It belongs to the CobT family.

It carries out the reaction 5,6-dimethylbenzimidazole + nicotinate beta-D-ribonucleotide = alpha-ribazole 5'-phosphate + nicotinate + H(+). It participates in nucleoside biosynthesis; alpha-ribazole biosynthesis; alpha-ribazole from 5,6-dimethylbenzimidazole: step 1/2. Catalyzes the synthesis of alpha-ribazole-5'-phosphate from nicotinate mononucleotide (NAMN) and 5,6-dimethylbenzimidazole (DMB). The polypeptide is Nicotinate-nucleotide--dimethylbenzimidazole phosphoribosyltransferase (Xanthomonas axonopodis pv. citri (strain 306)).